Reading from the N-terminus, the 496-residue chain is Probable cytosol aminopeptidase (496 aa).

Residues Lys262 and Asp267 each contribute to the Mn(2+) site. The active site involves Lys274. Mn(2+) contacts are provided by Asp285, Asp344, and Glu346. Arg348 is an active-site residue.

This sequence belongs to the peptidase M17 family. Mn(2+) is required as a cofactor.

It is found in the cytoplasm. It catalyses the reaction Release of an N-terminal amino acid, Xaa-|-Yaa-, in which Xaa is preferably Leu, but may be other amino acids including Pro although not Arg or Lys, and Yaa may be Pro. Amino acid amides and methyl esters are also readily hydrolyzed, but rates on arylamides are exceedingly low.. The enzyme catalyses Release of an N-terminal amino acid, preferentially leucine, but not glutamic or aspartic acids.. Functionally, presumably involved in the processing and regular turnover of intracellular proteins. Catalyzes the removal of unsubstituted N-terminal amino acids from various peptides. The polypeptide is Probable cytosol aminopeptidase (Rhizobium leguminosarum bv. trifolii (strain WSM2304)).